Here is a 799-residue protein sequence, read N- to C-terminus: MKAFSCLLSVIATAASLFQHVDARSHARDKLNNISRVERPVIHTPSRRVHAHSHFDLTFDLYPRSSRIKLQLEPNHDVLSHDARVTFLDTEGNVDRTERIERRDHSVFKGWAWTQAKSGAWERVGWARIILHRDGEDPLFEGVFTVMHDHHQVIAKSKYVRKRHQQDPPLDNTPGEYMLLFRGSDIAQTQSTGNVERSIMSSPSCDADTLAYDSNSNFMFPPLPEENNTSIWNYFMTSIGKRQMTDTGGVVPGSRDLKETIGSTSGCPNTRKVALIGVVADCTYTNTFASEMDARADIISVVNAASVVYEHSFNISLTLGEINILPKNCPATASSATPFNQQCDDRAGGGSFTLADRLNTFSAWRGKKTDDFAFWTLMTDCTTENQVGLAWAAQLCVKGVQGNPDSRNSSSQAVAGANVVSKTDNTWQVFAHEAGHIFGAVHDCDSMLCQNPANPDNSRCCPATASTCDARGRFMMNPTSGSQITDFSPCSIGQICSRMARRTILTSCLTTNRGVDTISGQQCGNGIVEDGEDCDCGDEESCKGNTCCDPKTCKYTSGSQCDDANEECCKGCKFASSSTICRTSSGPCDPEEKCSGNSGDCPHDIHSKDGETCGTDLQCASGQCTSRDLQCQMHLGNQVAGSRTVAFDSYGCEVACKDPDRPNVRYEGSLTFLDGTPCGGGGTCKNGQCSGSTFGNEVSDWVSRHKPIVIGVAVGAGCLLLLAIASCICGRSRRQRPRNRKMPPINMRPMAPVYNGWNGAPPNAQQSSPGGHPPYNNIPPPINAPPPAYPGHLPSTRYA.

Positions 1–23 (MKAFSCLLSVIATAASLFQHVDA) are cleaved as a signal peptide. Residues 24-707 (RSHARDKLNN…VSDWVSRHKP (684 aa)) lie on the Extracellular side of the membrane. Residues Asn-33, Asn-227, Asn-228, Asn-314, and Asn-408 are each glycosylated (N-linked (GlcNAc...) asparagine). The region spanning 272 to 511 (KVALIGVVAD…RTILTSCLTT (240 aa)) is the Peptidase M12B domain. 3 cysteine pairs are disulfide-bonded: Cys-396-Cys-496, Cys-449-Cys-460, and Cys-581-Cys-601. His-432 contributes to the Zn(2+) binding site. Glu-433 is a catalytic residue. Residues His-436 and His-442 each contribute to the Zn(2+) site. Positions 520-609 (GQQCGNGIVE…DCPHDIHSKD (90 aa)) constitute a Disintegrin domain. Residues 708–728 (IVIGVAVGAGCLLLLAIASCI) traverse the membrane as a helical segment. Residues 729–799 (CGRSRRQRPR…PGHLPSTRYA (71 aa)) are Cytoplasmic-facing. A disordered region spans residues 753-799 (VYNGWNGAPPNAQQSSPGGHPPYNNIPPPINAPPPAYPGHLPSTRYA). Positions 776 to 789 (NNIPPPINAPPPAY) are enriched in pro residues.

Zn(2+) serves as cofactor.

Its subcellular location is the membrane. In terms of biological role, probable zinc protease. This is Disintegrin and metalloproteinase domain-containing protein B (ADM-B) from Arthroderma benhamiae (strain ATCC MYA-4681 / CBS 112371) (Trichophyton mentagrophytes).